The following is a 379-amino-acid chain: Orotidine 5'-phosphate decarboxylase (379 aa).

Substrate contacts are provided by residues Asp-42, 64 to 66 (KTH), and 99 to 108 (DRKFGDIGHT). Lys-101 functions as the Proton donor in the catalytic mechanism. The tract at residues 165–198 (PTMDQFDDAEDAKDDEPATVNDNGSNMMEKPIYA) is disordered. The segment covering 169-178 (QFDDAEDAKD) has biased composition (acidic residues). Substrate contacts are provided by Tyr-331 and Arg-350.

This sequence belongs to the OMP decarboxylase family.

The catalysed reaction is orotidine 5'-phosphate + H(+) = UMP + CO2. It functions in the pathway pyrimidine metabolism; UMP biosynthesis via de novo pathway; UMP from orotate: step 2/2. The sequence is that of Orotidine 5'-phosphate decarboxylase (pyr4) from Hypocrea atroviridis (Trichoderma atroviride).